A 531-amino-acid polypeptide reads, in one-letter code: Peptide chain release factor 3 (531 aa).

Residues A13–K282 enclose the tr-type G domain. GTP is bound by residues S22–T29, D90–H94, and N144–D147.

It belongs to the TRAFAC class translation factor GTPase superfamily. Classic translation factor GTPase family. PrfC subfamily.

It is found in the cytoplasm. Its function is as follows. Increases the formation of ribosomal termination complexes and stimulates activities of RF-1 and RF-2. It binds guanine nucleotides and has strong preference for UGA stop codons. It may interact directly with the ribosome. The stimulation of RF-1 and RF-2 is significantly reduced by GTP and GDP, but not by GMP. The protein is Peptide chain release factor 3 of Psychrobacter cryohalolentis (strain ATCC BAA-1226 / DSM 17306 / VKM B-2378 / K5).